The sequence spans 867 residues: Valine--tRNA ligase (867 aa).

The 'HIGH' region motif lies at 42 to 52 (PNITGKIHMGH). The 'KMSKS' region motif lies at 521–525 (KMSKS). Lys524 is a binding site for ATP. Residues 794-867 (LGTLIDVKSE…QIISDLEAKA (74 aa)) are a coiled coil.

It belongs to the class-I aminoacyl-tRNA synthetase family. ValS type 1 subfamily. As to quaternary structure, monomer.

The protein resides in the cytoplasm. It carries out the reaction tRNA(Val) + L-valine + ATP = L-valyl-tRNA(Val) + AMP + diphosphate. In terms of biological role, catalyzes the attachment of valine to tRNA(Val). As ValRS can inadvertently accommodate and process structurally similar amino acids such as threonine, to avoid such errors, it has a 'posttransfer' editing activity that hydrolyzes mischarged Thr-tRNA(Val) in a tRNA-dependent manner. The polypeptide is Valine--tRNA ligase (Fervidobacterium nodosum (strain ATCC 35602 / DSM 5306 / Rt17-B1)).